We begin with the raw amino-acid sequence, 272 residues long: Dermonecrotic toxin SpeSicTox-betaIB2a (272 aa).

H5 is a catalytic residue. Residues E25 and D27 each coordinate Mg(2+). Residue H41 is the Nucleophile of the active site. 2 disulfide bridges follow: C45-C51 and C47-C191. D85 lines the Mg(2+) pocket.

This sequence belongs to the arthropod phospholipase D family. Class II subfamily. Mg(2+) is required as a cofactor. As to expression, expressed by the venom gland.

The protein localises to the secreted. The catalysed reaction is an N-(acyl)-sphingosylphosphocholine = an N-(acyl)-sphingosyl-1,3-cyclic phosphate + choline. It carries out the reaction an N-(acyl)-sphingosylphosphoethanolamine = an N-(acyl)-sphingosyl-1,3-cyclic phosphate + ethanolamine. It catalyses the reaction a 1-acyl-sn-glycero-3-phosphocholine = a 1-acyl-sn-glycero-2,3-cyclic phosphate + choline. The enzyme catalyses a 1-acyl-sn-glycero-3-phosphoethanolamine = a 1-acyl-sn-glycero-2,3-cyclic phosphate + ethanolamine. In terms of biological role, dermonecrotic toxins cleave the phosphodiester linkage between the phosphate and headgroup of certain phospholipids (sphingolipid and lysolipid substrates), forming an alcohol (often choline) and a cyclic phosphate. This toxin acts on sphingomyelin (SM). It may also act on ceramide phosphoethanolamine (CPE), lysophosphatidylcholine (LPC) and lysophosphatidylethanolamine (LPE), but not on lysophosphatidylserine (LPS), and lysophosphatidylglycerol (LPG). It acts by transphosphatidylation, releasing exclusively cyclic phosphate products as second products. Induces dermonecrosis, hemolysis, increased vascular permeability, edema, inflammatory response, and platelet aggregation. The protein is Dermonecrotic toxin SpeSicTox-betaIB2a of Sicarius peruensis (Six-eyed sand spider).